The primary structure comprises 187 residues: MVEYWKRNFFMVLVLQAFYLANCLTDEEIPEEWLLLHVLQGQIGAGNYSYLRLNHEGTIILQVQSLKGDADIYVSSLTLNPTFDDYELQSTTCGLDKITIAHHLSRPVGIGIYGHPSHMESEFELKVYYDRTVREDPFADASYDPEVLEAKQRQQQQQTSLDSSQEEESVLRTILIGVLKIVLELLF.

An N-terminal signal peptide occupies residues 1-23 (MVEYWKRNFFMVLVLQAFYLANC). Residue N47 is glycosylated (N-linked (GlcNAc...) asparagine).

It belongs to the UPF0669 family.

It localises to the secreted. In Xenopus tropicalis (Western clawed frog), this protein is UPF0669 protein C6orf120 homolog.